Consider the following 376-residue polypeptide: Chaperone protein DnaJ (376 aa).

Residues 4-68 (DYYDILGVDR…DTRSRYDQFG (65 aa)) form the J domain. Residues 135–217 (GGEKEIRIPH…CNGAGRRQVT (83 aa)) form a CR-type zinc finger. Cys-148, Cys-151, Cys-165, Cys-168, Cys-191, Cys-194, Cys-205, and Cys-208 together coordinate Zn(2+). CXXCXGXG motif repeat units lie at residues 148–155 (CQVCKGDG), 165–172 (CSTCNGQG), 191–198 (CPACNGQG), and 205–212 (CEVCNGAG).

The protein belongs to the DnaJ family. Homodimer. The cofactor is Zn(2+).

The protein resides in the cytoplasm. Functionally, participates actively in the response to hyperosmotic and heat shock by preventing the aggregation of stress-denatured proteins and by disaggregating proteins, also in an autonomous, DnaK-independent fashion. Unfolded proteins bind initially to DnaJ; upon interaction with the DnaJ-bound protein, DnaK hydrolyzes its bound ATP, resulting in the formation of a stable complex. GrpE releases ADP from DnaK; ATP binding to DnaK triggers the release of the substrate protein, thus completing the reaction cycle. Several rounds of ATP-dependent interactions between DnaJ, DnaK and GrpE are required for fully efficient folding. Also involved, together with DnaK and GrpE, in the DNA replication of plasmids through activation of initiation proteins. This Crocosphaera subtropica (strain ATCC 51142 / BH68) (Cyanothece sp. (strain ATCC 51142)) protein is Chaperone protein DnaJ.